The following is a 432-amino-acid chain: Solute carrier family 38 member 8 (432 aa).

11 helical membrane-spanning segments follow: residues 29-49, 59-79, 103-123, 144-164, 175-195, 215-237, 253-273, 292-312, 345-365, 368-388, and 409-429; these read AVFI…PWAF, FLVA…LGYA, LCEI…LRVI, AAQN…LSAL, ILGT…YYLW, VFSV…SIYC, LSLL…FLTF, IIVA…IVLF, LPLT…LPDL, IISI…GLCL, and GILS…VAMV.

The protein belongs to the amino acid/polyamine transporter 2 family. As to expression, expressed in neurons located in the gray matter. Highly expressed in thalamus, hypothalamus, amygdala and pons. Expressed in the CA3 area of hippocampus and in the Purkinje layer of the cerebellum (at protein level). Expressed in the eye.

It is found in the membrane. It localises to the cytoplasm. The protein resides in the cell cortex. Its subcellular location is the cell projection. The protein localises to the axon. The enzyme catalyses L-glutamine(out) = L-glutamine(in). It catalyses the reaction L-alanine(in) = L-alanine(out). The catalysed reaction is L-histidine(out) = L-histidine(in). It carries out the reaction L-aspartate(out) = L-aspartate(in). The enzyme catalyses L-arginine(in) = L-arginine(out). It catalyses the reaction L-leucine(in) = L-leucine(out). Functionally, electrogenic sodium-dependent amino acid transporter with a preference for L-glutamine, L-alanine, L-histidine, L-aspartate and L-arginine. May facilitate glutamine uptake in both excitatory and inhibitory neurons. The transport mechanism and stoichiometry remain to be elucidated. This chain is Solute carrier family 38 member 8, found in Mus musculus (Mouse).